The sequence spans 505 residues: Lysine--tRNA ligase (505 aa).

Residues E415 and E422 each contribute to the Mg(2+) site.

This sequence belongs to the class-II aminoacyl-tRNA synthetase family. As to quaternary structure, homodimer. It depends on Mg(2+) as a cofactor.

It localises to the cytoplasm. The catalysed reaction is tRNA(Lys) + L-lysine + ATP = L-lysyl-tRNA(Lys) + AMP + diphosphate. This chain is Lysine--tRNA ligase, found in Cronobacter sakazakii (strain ATCC BAA-894) (Enterobacter sakazakii).